A 980-amino-acid polypeptide reads, in one-letter code: Macrophage colony-stimulating factor 1 receptor (980 aa).

The signal sequence occupies residues 1 to 19 (MGPRALLVLLVATAWHAQG). Topologically, residues 20–514 (VPVIQPSGPE…QLPDELLFTP (495 aa)) are extracellular. 5 consecutive Ig-like C2-type domains span residues 21–100 (PVIQ…IHLY), 107–197 (PWKV…KVQK), 202–297 (PATL…RVVE), 299–397 (AYLN…LTLR), and 400–499 (PEVR…WPIS). Cys-42 and Cys-84 are joined by a disulfide. N-linked (GlcNAc...) asparagine glycosylation is found at Asn-45, Asn-73, Asn-94, Asn-153, Asn-275, Asn-286, Asn-302, Asn-335, Asn-410, Asn-477, and Asn-490. Disulfide bonds link Cys-127/Cys-177 and Cys-224/Cys-278. The cysteines at positions 417 and 482 are disulfide-linked. A helical membrane pass occupies residues 515–535 (VLLTCMSIMALLLLLLLLLLY). Topologically, residues 536 to 980 (KYKQKPKYQV…LLQPNNYQFC (445 aa)) are cytoplasmic. The tract at residues 539 to 571 (QKPKYQVRWKIIESYEGNSYTFIDPTQLPYNEK) is regulatory juxtamembrane domain. 2 positions are modified to phosphotyrosine; by autocatalysis: Tyr-543 and Tyr-558. Positions 579-908 (LQFGKTLGAG…PTFQQICSLL (330 aa)) constitute a Protein kinase domain. ATP is bound by residues 585 to 593 (LGAGAFGKV) and Lys-613. Tyr-696 and Tyr-705 each carry phosphotyrosine; by autocatalysis. Ser-710 is subject to Phosphoserine. A Phosphotyrosine; by autocatalysis modification is found at Tyr-720. A disordered region spans residues 723–743 (MRPVSTSSSNDSFSEEDLGKE). Asp-776 acts as the Proton acceptor in catalysis. Residues 794-816 (DFGLARDIMNDSNYIVKGNARLP) are activation loop. Phosphotyrosine; by autocatalysis occurs at positions 807 and 921. Residues 918–959 (VPNYTNLPSSSSSSSSSSSSCRTGSGGGSSSEPEEESSSEHL) are disordered. A compositionally biased stretch (low complexity) spans 926-940 (SSSSSSSSSSSSCRT). At Tyr-977 the chain carries Phosphotyrosine; by autocatalysis.

The protein belongs to the protein kinase superfamily. Tyr protein kinase family. CSF-1/PDGF receptor subfamily. As to quaternary structure, monomer. Homodimer. Interacts with CSF1 and IL34. Interaction with dimeric CSF1 or IL34 leads to receptor homodimerization. Interacts with INPPL1/SHIP2 and THOC5. Interacts (tyrosine phosphorylated) with PLCG2 (via SH2 domain). Interacts (tyrosine phosphorylated) with PIK3R1 (via SH2 domain). Interacts (tyrosine phosphorylated) with FYN, YES1 and SRC (via SH2 domain). Interacts (tyrosine phosphorylated) with CBL, GRB2 and SLA2. Post-translationally, autophosphorylated in response to CSF1 or IL34 binding. Phosphorylation at Tyr-558 is important for normal down-regulation of signaling by ubiquitination, internalization and degradation. Phosphorylation at Tyr-558 and Tyr-807 is important for interaction with SRC family members, including FYN, YES1 and SRC, and for subsequent activation of these protein kinases. Phosphorylation at Tyr-696 and Tyr-921 is important for interaction with GRB2. Phosphorylation at Tyr-720 is important for interaction with PIK3R1. Phosphorylation at Tyr-720 and Tyr-807 is important for interaction with PLCG2. Phosphorylation at Tyr-977 is important for interaction with CBL. Dephosphorylation by PTPN2 negatively regulates downstream signaling and macrophage differentiation. Ubiquitinated. Becomes rapidly polyubiquitinated after autophosphorylation, leading to its degradation.

The protein localises to the cell membrane. It carries out the reaction L-tyrosyl-[protein] + ATP = O-phospho-L-tyrosyl-[protein] + ADP + H(+). Its activity is regulated as follows. Present in an inactive conformation in the absence of bound ligand. CSF1 or IL34 binding leads to dimerization and activation by autophosphorylation on tyrosine residues. Functionally, tyrosine-protein kinase that acts as a cell-surface receptor for CSF1 and IL34 and plays an essential role in the regulation of survival, proliferation and differentiation of hematopoietic precursor cells, especially mononuclear phagocytes, such as macrophages and monocytes. Promotes the release of pro-inflammatory chemokines in response to IL34 and CSF1, and thereby plays an important role in innate immunity and in inflammatory processes. Plays an important role in the regulation of osteoclast proliferation and differentiation, the regulation of bone resorption, and is required for normal bone and tooth development. Required for normal male and female fertility, and for normal development of milk ducts and acinar structures in the mammary gland during pregnancy. Promotes reorganization of the actin cytoskeleton, regulates formation of membrane ruffles, cell adhesion and cell migration, and promotes cancer cell invasion. Activates several signaling pathways in response to ligand binding, including the ERK1/2 and the JNK pathway. Phosphorylates PIK3R1, PLCG2, GRB2, SLA2 and CBL. Activation of PLCG2 leads to the production of the cellular signaling molecules diacylglycerol and inositol 1,4,5-trisphosphate, that then lead to the activation of protein kinase C family members, especially PRKCD. Phosphorylation of PIK3R1, the regulatory subunit of phosphatidylinositol 3-kinase, leads to activation of the AKT1 signaling pathway. Activated CSF1R also mediates activation of the MAP kinases MAPK1/ERK2 and/or MAPK3/ERK1, and of the SRC family kinases SRC, FYN and YES1. Activated CSF1R transmits signals both via proteins that directly interact with phosphorylated tyrosine residues in its intracellular domain, or via adapter proteins, such as GRB2. Promotes activation of STAT family members STAT3, STAT5A and/or STAT5B. Promotes tyrosine phosphorylation of SHC1 and INPP5D/SHIP-1. Receptor signaling is down-regulated by protein phosphatases, such as INPP5D/SHIP-1, that dephosphorylate the receptor and its downstream effectors, and by rapid internalization of the activated receptor. In the central nervous system, may play a role in the development of microglia macrophages. In Felis catus (Cat), this protein is Macrophage colony-stimulating factor 1 receptor (CSF1R).